We begin with the raw amino-acid sequence, 100 residues long: Large ribosomal subunit protein uL23 (100 aa).

The protein belongs to the universal ribosomal protein uL23 family. In terms of assembly, part of the 50S ribosomal subunit. Contacts protein L29, and trigger factor when it is bound to the ribosome.

In terms of biological role, one of the early assembly proteins it binds 23S rRNA. One of the proteins that surrounds the polypeptide exit tunnel on the outside of the ribosome. Forms the main docking site for trigger factor binding to the ribosome. This is Large ribosomal subunit protein uL23 from Synechococcus sp. (strain CC9902).